Reading from the N-terminus, the 94-residue chain is Pyrimidine/purine nucleoside phosphorylase (94 aa).

Belongs to the nucleoside phosphorylase PpnP family.

The catalysed reaction is a purine D-ribonucleoside + phosphate = a purine nucleobase + alpha-D-ribose 1-phosphate. It catalyses the reaction adenosine + phosphate = alpha-D-ribose 1-phosphate + adenine. The enzyme catalyses cytidine + phosphate = cytosine + alpha-D-ribose 1-phosphate. It carries out the reaction guanosine + phosphate = alpha-D-ribose 1-phosphate + guanine. The catalysed reaction is inosine + phosphate = alpha-D-ribose 1-phosphate + hypoxanthine. It catalyses the reaction thymidine + phosphate = 2-deoxy-alpha-D-ribose 1-phosphate + thymine. The enzyme catalyses uridine + phosphate = alpha-D-ribose 1-phosphate + uracil. It carries out the reaction xanthosine + phosphate = alpha-D-ribose 1-phosphate + xanthine. In terms of biological role, catalyzes the phosphorolysis of diverse nucleosides, yielding D-ribose 1-phosphate and the respective free bases. Can use uridine, adenosine, guanosine, cytidine, thymidine, inosine and xanthosine as substrates. Also catalyzes the reverse reactions. The sequence is that of Pyrimidine/purine nucleoside phosphorylase from Vibrio parahaemolyticus serotype O3:K6 (strain RIMD 2210633).